A 530-amino-acid chain; its full sequence is NADH-quinone oxidoreductase subunit C/D (530 aa).

Positions 1–144 (MQEIQFIVPA…NPLCMANEET (144 aa)) are NADH dehydrogenase I subunit C. The segment at 171–530 (EYVVNIGPQH…LDYVVPDIDR (360 aa)) is NADH dehydrogenase I subunit D.

In the N-terminal section; belongs to the complex I 30 kDa subunit family. This sequence in the C-terminal section; belongs to the complex I 49 kDa subunit family. In terms of assembly, NDH-1 is composed of 13 different subunits. Subunits NuoB, CD, E, F, and G constitute the peripheral sector of the complex.

It localises to the cell inner membrane. The enzyme catalyses a quinone + NADH + 5 H(+)(in) = a quinol + NAD(+) + 4 H(+)(out). Its function is as follows. NDH-1 shuttles electrons from NADH, via FMN and iron-sulfur (Fe-S) centers, to quinones in the respiratory chain. The immediate electron acceptor for the enzyme in this species is believed to be a menaquinone. Couples the redox reaction to proton translocation (for every two electrons transferred, four hydrogen ions are translocated across the cytoplasmic membrane), and thus conserves the redox energy in a proton gradient. The sequence is that of NADH-quinone oxidoreductase subunit C/D from Bacteroides thetaiotaomicron (strain ATCC 29148 / DSM 2079 / JCM 5827 / CCUG 10774 / NCTC 10582 / VPI-5482 / E50).